The sequence spans 240 residues: Ribonuclease 3 (240 aa).

In terms of domain architecture, RNase III spans 13–143 (DHASLLEALG…LLGAVHLQHG (131 aa)). Glu53 is a binding site for Mg(2+). Residue Asp57 is part of the active site. Mg(2+) contacts are provided by Asp129 and Glu132. Glu132 is an active-site residue. The 69-residue stretch at 170 to 238 (DWKTSLQELT…AGAAYQALTA (69 aa)) folds into the DRBM domain.

The protein belongs to the ribonuclease III family. As to quaternary structure, homodimer. Mg(2+) serves as cofactor.

The protein localises to the cytoplasm. It catalyses the reaction Endonucleolytic cleavage to 5'-phosphomonoester.. Its function is as follows. Digests double-stranded RNA. Involved in the processing of primary rRNA transcript to yield the immediate precursors to the large and small rRNAs (23S and 16S). Processes some mRNAs, and tRNAs when they are encoded in the rRNA operon. Processes pre-crRNA and tracrRNA of type II CRISPR loci if present in the organism. This is Ribonuclease 3 from Nocardia farcinica (strain IFM 10152).